Here is a 208-residue protein sequence, read N- to C-terminus: ATP synthase subunit beta, chloroplastic (208 aa).

Belongs to the ATPase alpha/beta chains family. In terms of assembly, F-type ATPases have 2 components, CF(1) - the catalytic core - and CF(0) - the membrane proton channel. CF(1) has five subunits: alpha(3), beta(3), gamma(1), delta(1), epsilon(1). CF(0) has four main subunits: a(1), b(1), b'(1) and c(9-12).

Its subcellular location is the plastid. It localises to the chloroplast thylakoid membrane. It carries out the reaction ATP + H2O + 4 H(+)(in) = ADP + phosphate + 5 H(+)(out). Its function is as follows. Produces ATP from ADP in the presence of a proton gradient across the membrane. The catalytic sites are hosted primarily by the beta subunits. This is ATP synthase subunit beta, chloroplastic (atpB) from Hypolepis hostilis (Fern).